A 372-amino-acid chain; its full sequence is MTGDNTLIHSHGINRRDFMKLCAALAATMGLSSKAAAEMAESVTNPQRPPVIWIGAQECTGCTESLLRATHPTVENLVLETISLEYHEVLSAAFGHQVEENKHNALEKYKGQYVLVVDGSIPLKDNGIYCMVAGEPIVDHIRKAAEGAAAIIAIGSCSAWGGVAAAGVNPTGAVSLQEVLPGKTVINIPGCPPNPHNFLATVAHIITYGKPPKLDDKNRPTFAYGRLIHEHCERRPHFDAGRFAKEFGDEGHREGWCLYHLGCKGPETYGNCSTLQFCDVGGVWPVAIGHPCYGCNEEGIGFHKGIHQLANVENQTPRSQKPDVNAKEGGNVSAGAIGLLGGVVGLVAGVSVMAVRELGRQQKKDNADSRGE.

The tat-type signal signal peptide spans 1-37 (MTGDNTLIHSHGINRRDFMKLCAALAATMGLSSKAAA). Positions 59, 62, 157, 191, 229, 232, 257, and 263 each coordinate [4Fe-4S] cluster. [3Fe-4S] cluster is bound by residues Cys272, Cys292, and Cys295.

The protein belongs to the [NiFe]/[NiFeSe] hydrogenase small subunit family. In terms of assembly, heterodimer of a large and a small subunit. [4Fe-4S] cluster serves as cofactor. [3Fe-4S] cluster is required as a cofactor. Predicted to be exported by the Tat system. The position of the signal peptide cleavage has not been experimentally proven.

Its subcellular location is the cell membrane. The protein resides in the periplasm. It carries out the reaction H2 + A = AH2. Its function is as follows. This is one of three E.coli hydrogenases synthesized in response to different physiological conditions. HYD2 is involved in hydrogen uptake. In Escherichia coli O157:H7, this protein is Hydrogenase-2 small chain (hybO).